The chain runs to 325 residues: Peroxidase 47 (325 aa).

Residues 1-36 (MLTRFKKQNNKMVRANIVSMVLLMHAIVGFPFHARG) form the signal peptide. Cystine bridges form between Cys-46/Cys-125, Cys-79/Cys-84, Cys-131/Cys-321, and Cys-209/Cys-235. His-77 (proton acceptor) is an active-site residue. Asp-78, Gly-83, Asp-85, and Ser-87 together coordinate Ca(2+). Pro-172 contributes to the substrate binding site. The N-linked (GlcNAc...) asparagine glycan is linked to Asn-177. His-202 contacts heme b. Residue Thr-203 coordinates Ca(2+). Ca(2+) is bound by residues Asp-246, Thr-248, and Asp-253.

The protein belongs to the peroxidase family. Classical plant (class III) peroxidase subfamily. Heme b serves as cofactor. Ca(2+) is required as a cofactor.

The protein localises to the secreted. The catalysed reaction is 2 a phenolic donor + H2O2 = 2 a phenolic radical donor + 2 H2O. Functionally, removal of H(2)O(2), oxidation of toxic reductants, biosynthesis and degradation of lignin, suberization, auxin catabolism, response to environmental stresses such as wounding, pathogen attack and oxidative stress. These functions might be dependent on each isozyme/isoform in each plant tissue. The protein is Peroxidase 47 (PER47) of Arabidopsis thaliana (Mouse-ear cress).